Here is a 425-residue protein sequence, read N- to C-terminus: Enolase (425 aa).

Gln-170 serves as a coordination point for (2R)-2-phosphoglycerate. Glu-214 functions as the Proton donor in the catalytic mechanism. Positions 250, 291, and 317 each coordinate Mg(2+). Lys-342, Arg-371, Ser-372, and Lys-393 together coordinate (2R)-2-phosphoglycerate. The Proton acceptor role is filled by Lys-342.

Belongs to the enolase family. Mg(2+) is required as a cofactor.

The protein localises to the cytoplasm. It localises to the secreted. Its subcellular location is the cell surface. It carries out the reaction (2R)-2-phosphoglycerate = phosphoenolpyruvate + H2O. Its pathway is carbohydrate degradation; glycolysis; pyruvate from D-glyceraldehyde 3-phosphate: step 4/5. In terms of biological role, catalyzes the reversible conversion of 2-phosphoglycerate (2-PG) into phosphoenolpyruvate (PEP). It is essential for the degradation of carbohydrates via glycolysis. This chain is Enolase, found in Methanococcoides burtonii (strain DSM 6242 / NBRC 107633 / OCM 468 / ACE-M).